A 361-amino-acid chain; its full sequence is Neuronal-specific septin-3 (361 aa).

Residues 1-46 form a disordered region; that stretch reads MSEIVPPEVRPKPAVPAKPSHVAPPSSAPFVPSPQGTGGEGQGSGR. The span at 15–34 shows a compositional bias: low complexity; sequence VPAKPSHVAPPSSAPFVPSP. Residues 36–46 are compositionally biased toward gly residues; the sequence is GTGGEGQGSGR. One can recognise a Septin-type G domain in the interval 70–342; sequence AGFDFNIMVV…ETYRAKRLND (273 aa). The interval 80 to 87 is G1 motif; sequence GQSGLGKS. GTP contacts are provided by residues 80–87 and threonine 114; that span reads GQSGLGKS. Positions 137 to 140 are G3 motif; sequence DTPG. The tract at residues 219-222 is G4 motif; the sequence is AKSD. GTP-binding positions include 220 to 228, glycine 276, and arginine 291; that span reads KSDTLTPEE. The disordered stretch occupies residues 341-361; it reads NDNGGLHPISSSGHDTQESNL. The segment covering 349 to 361 has biased composition (polar residues); that stretch reads ISSSGHDTQESNL.

This sequence belongs to the TRAFAC class TrmE-Era-EngA-EngB-Septin-like GTPase superfamily. Septin GTPase family.

Its subcellular location is the cytoplasm. May be involved in cytokinesis. The sequence is that of Neuronal-specific septin-3 from Danio rerio (Zebrafish).